Here is a 944-residue protein sequence, read N- to C-terminus: Respiratory burst oxidase homolog protein F (944 aa).

Residues 2–387 (KPFSKNDRRR…VYIMQENWKR (386 aa)) are Cytoplasmic-facing. 2 coiled-coil regions span residues 102–126 (QFSQ…KRFS) and 157–184 (LEAR…RGLR). EF-hand-like stretches follow at residues 207–215 (EKNGYIYRS) and 241–252 (RRLKVEKINHDE). 2 consecutive EF-hand domains span residues 264–299 (SFDS…SASA) and 308–343 (QAEE…KDTY). 7 residues coordinate Ca(2+): aspartate 277, asparagine 279, aspartate 281, arginine 283, glutamate 288, aspartate 321, and tyrosine 327. Residues serine 354 and serine 358 each carry the phosphoserine modification. A helical membrane pass occupies residues 388 to 408 (IWVLSLWIMIMIGLFLWKFFQ). Topologically, residues 409-475 (YKQKDAFHVM…INFHKTIAGA (67 aa)) are extracellular. Residues 426–583 (KGAAETLKFN…LFVIVYILLI (158 aa)) enclose the Ferric oxidoreductase domain. Residues 476-492 (IVVAVILHIGDHLACDF) traverse the membrane as a helical segment. Over 493–527 (PRIVRATEYDYNRYLFHYFQTKQPTYFDLVKGPEG) the chain is Cytoplasmic. A helical membrane pass occupies residues 528-548 (ITGILMVILMIISFTLATRWF). Topologically, residues 549–570 (RRNLVKLPKPFDRLTGFNAFWY) are extracellular. Residues 571 to 591 (SHHLFVIVYILLILHGIFLYF) form a helical membrane-spanning segment. Over 592–599 (AKPWYVRT) the chain is Cytoplasmic. Residues 600–617 (TWMYLAVPVLLYGGERTL) traverse the membrane as a helical segment. Residues 618–744 (RYFRSGSYSV…PYGAPAQDYR (127 aa)) lie on the Extracellular side of the membrane. Residues 622–742 (SGSYSVRLLK…DGPYGAPAQD (121 aa)) form the FAD-binding FR-type domain. A helical membrane pass occupies residues 745–765 (KYDVLLLVGLGIGATPFISIL). Residues 766–944 (KDLLNNIVKM…TKFEFHKEHF (179 aa)) lie on the Cytoplasmic side of the membrane.

Belongs to the RBOH (TC 5.B.1.3) family. As to quaternary structure, monomer and homodimer. Interacts (via N-terminus) with CIPK26. Interacts (via N-terminus) with SRC2. In terms of processing, not glycosylated. Phosphorylated by CIPK26. Expressed in roots, stems, seedlings, inflorescences, leaves and guard cells.

It localises to the cell membrane. Its activity is regulated as follows. Inhibited by diphenylene iodonium (DPI). Calcium-dependent NADPH oxidase that generates superoxide. Generates reactive oxygen species (ROS) during incompatible interactions with pathogens and is important in the regulation of the hypersensitive response (HR). Involved in abscisic acid-induced stomatal closing and in UV-B and abscisic acid ROS-dependent signaling. This Arabidopsis thaliana (Mouse-ear cress) protein is Respiratory burst oxidase homolog protein F (RBOHF).